The following is a 607-amino-acid chain: Glycosyltransferase 25 family member (607 aa).

The N-terminal stretch at 1–22 (MKPVSCVGLLVLLVGVLVTVKG) is a signal peptide. 4 N-linked (GlcNAc...) asparagine glycosylation sites follow: N226, N254, N514, and N565. Residues 566 to 607 (DTSDSSAEKKGDKEQLSSKTLMDSTISRDEHELSVANRKSEL) form a disordered region. 2 stretches are compositionally biased toward basic and acidic residues: residues 571–581 (SAEKKGDKEQL) and 591–607 (ISRDEHELSVANRKSEL). A Prevents secretion from ER motif is present at residues 604–607 (KSEL).

It belongs to the glycosyltransferase 25 family.

It is found in the endoplasmic reticulum lumen. The polypeptide is Glycosyltransferase 25 family member (Aedes aegypti (Yellowfever mosquito)).